A 474-amino-acid polypeptide reads, in one-letter code: Ribulose bisphosphate carboxylase large chain (474 aa).

N-acetylproline is present on P2. Position 13 is an N6,N6,N6-trimethyllysine (K13). Substrate-binding residues include N122 and T172. K174 (proton acceptor) is an active-site residue. K176 is a binding site for substrate. The Mg(2+) site is built by K200, D202, and E203. The residue at position 200 (K200) is an N6-carboxylysine. Residue H293 is the Proton acceptor of the active site. Positions 294, 326, and 378 each coordinate substrate.

Belongs to the RuBisCO large chain family. Type I subfamily. In terms of assembly, heterohexadecamer of 8 large chains and 8 small chains; disulfide-linked. The disulfide link is formed within the large subunit homodimers. Requires Mg(2+) as cofactor. The disulfide bond which can form in the large chain dimeric partners within the hexadecamer appears to be associated with oxidative stress and protein turnover.

It localises to the plastid. It is found in the chloroplast. The enzyme catalyses 2 (2R)-3-phosphoglycerate + 2 H(+) = D-ribulose 1,5-bisphosphate + CO2 + H2O. It carries out the reaction D-ribulose 1,5-bisphosphate + O2 = 2-phosphoglycolate + (2R)-3-phosphoglycerate + 2 H(+). Its function is as follows. RuBisCO catalyzes two reactions: the carboxylation of D-ribulose 1,5-bisphosphate, the primary event in carbon dioxide fixation, as well as the oxidative fragmentation of the pentose substrate in the photorespiration process. Both reactions occur simultaneously and in competition at the same active site. The sequence is that of Ribulose bisphosphate carboxylase large chain from Oltmannsiellopsis viridis (Marine flagellate).